The primary structure comprises 94 residues: Putative RNA-binding protein RbpD (94 aa).

In terms of domain architecture, RRM spans 2 to 79; it reads TIYVGNLSYR…RQLRVNKAKP (78 aa). Positions 73–94 are disordered; that stretch reads RVNKAKPREDDRRGSWGKKQDY. The segment covering 78–94 has biased composition (basic and acidic residues); it reads KPREDDRRGSWGKKQDY.

This chain is Putative RNA-binding protein RbpD (rbpD), found in Nostoc sp. (strain PCC 7120 / SAG 25.82 / UTEX 2576).